The chain runs to 150 residues: MGIQHEFDIIINGDIALRNLQLHKGDNYGCKLKIISNDYKKLKFRFIIRPDWSEIDEVKGLTVFANNYAVKVNKVDDTFYYVIYEAVIHLYNKKTEILIYSDDENELFKHYYPYISLNMISKKYKVKEENYSSPYIEHPLIPYRDYESMD.

Belongs to the orthopoxvirus OPG027 family.

Inhibits antiviral activity induced by type I interferons. Does not block signal transduction of IFN, but is important to counteract the host antiviral state induced by a pre-treatment with IFN. This is Interferon antagonist OPG027 (OPG027) from Vaccinia virus (strain Ankara) (VACV).